We begin with the raw amino-acid sequence, 199 residues long: uncharacterized protein (199 aa).

The signal sequence occupies residues 1–23 (MKPGCTLFFLLCSALTVTTEAHA).

This is an uncharacterized protein from Escherichia coli (strain K12).